The chain runs to 169 residues: dCTP pyrophosphatase 1 (169 aa).

Residues methionine 1 to serine 26 form a disordered region. The segment covering glutamate 14 to serine 26 has biased composition (polar residues). Substrate contacts are provided by residues histidine 37 and tryptophan 46 to histidine 50. Glutamate 62 and glutamate 65 together coordinate Mg(2+). Substrate is bound at residue tryptophan 72. Residue serine 84 is modified to Phosphoserine. 2 residues coordinate Mg(2+): glutamate 94 and aspartate 97. Residue tyrosine 101 participates in substrate binding. Positions leucine 143–threonine 169 are disordered.

Homotetramer. Mg(2+) is required as a cofactor.

The protein resides in the cytoplasm. The protein localises to the cytosol. It catalyses the reaction dCTP + H2O = dCMP + diphosphate + H(+). In terms of biological role, hydrolyzes deoxynucleoside triphosphates (dNTPs) to the corresponding nucleoside monophosphates. Has a strong preference for dCTP and its analogs including 5-iodo-dCTP and 5-methyl-dCTP for which it may even have a higher efficiency. May protect DNA or RNA against the incorporation of these genotoxic nucleotide analogs through their catabolism. The chain is dCTP pyrophosphatase 1 from Bos taurus (Bovine).